A 507-amino-acid chain; its full sequence is Chromosomal replication initiator protein DnaA (507 aa).

The interval 1–112 (MTDDPGSGFT…PATDEADDTT (112 aa)) is domain I, interacts with DnaA modulators. Positions 99 to 162 (RIAPPATDEA…ERPRNTDSAT (64 aa)) are disordered. Positions 113-127 (VPPSENPATTSPDTT) are enriched in polar residues. Residues 113 to 166 (VPPSENPATTSPDTTTDNDEIDDSAAARGDNQHSWPSYFTERPRNTDSATAGVT) are domain II. A domain III, AAA+ region region spans residues 167 to 383 (SLNRRYTFDT…GALIRVTAFA (217 aa)). ATP contacts are provided by G211, G213, K214, and T215. The interval 384 to 507 (SLNKTPIDKA…TTRIRQRSKR (124 aa)) is domain IV, binds dsDNA.

It belongs to the DnaA family. In terms of assembly, oligomerizes as a right-handed, spiral filament on DNA at oriC.

The protein resides in the cytoplasm. Functionally, plays an essential role in the initiation and regulation of chromosomal replication. ATP-DnaA binds to the origin of replication (oriC) to initiate formation of the DNA replication initiation complex once per cell cycle. Binds the DnaA box (a 9 base pair repeat at the origin) and separates the double-stranded (ds)DNA. Forms a right-handed helical filament on oriC DNA; dsDNA binds to the exterior of the filament while single-stranded (ss)DNA is stabiized in the filament's interior. The ATP-DnaA-oriC complex binds and stabilizes one strand of the AT-rich DNA unwinding element (DUE), permitting loading of DNA polymerase. After initiation quickly degrades to an ADP-DnaA complex that is not apt for DNA replication. Binds acidic phospholipids. This is Chromosomal replication initiator protein DnaA from Mycobacterium bovis (strain BCG / Tokyo 172 / ATCC 35737 / TMC 1019).